Consider the following 553-residue polypeptide: Cytochrome P450 monooxygenase alnD (553 aa).

Residues 351–371 (LVGAGFVTSSAFLSWLIYSLV) form a helical membrane-spanning segment. Cysteine 493 lines the heme pocket. N-linked (GlcNAc...) asparagine glycosylation is present at asparagine 518.

It belongs to the cytochrome P450 family. Requires heme as cofactor.

Its subcellular location is the membrane. Its pathway is polyketide biosynthesis. Functionally, cytochrome P450 monooxygenase; part of the gene cluster that mediates the biosynthesis of asperlin, a polyketide showing anti-inflammatory, antitumor and antibiotic activities. The first step of the asperlin biosynthesis is the production of the intermediate 2,4,6-octatrienoic acid by the highly redusing polyketide synthase alnA with cleavage of the PKS product by the esterase alnB. 2,4,6-octatrienoic acid is further converted to asperlin via several steps involving the remaining enzymes from the cluster. The sequence is that of Cytochrome P450 monooxygenase alnD from Emericella nidulans (strain FGSC A4 / ATCC 38163 / CBS 112.46 / NRRL 194 / M139) (Aspergillus nidulans).